A 429-amino-acid chain; its full sequence is Zinc-regulated GTPase metalloprotein activator 1 (429 aa).

The short motif at 15–22 is the psi-PxLVp motif element; it reads GELPCLVT. 78-85 provides a ligand contact to GTP; the sequence is GYLGSGKS. Zn(2+) contacts are provided by cysteine 136, cysteine 138, and cysteine 139. The short motif at 136–139 is the CXCC motif element; that stretch reads CLCC. GTP-binding positions include 139 to 143 and 244 to 247; these read CSLKN and NKYD. The CobW C-terminal domain maps to 362-428; sequence RDWEVQRTKG…SIEELLRKTL (67 aa).

This sequence belongs to the SIMIBI class G3E GTPase family. ZNG1 subfamily.

The catalysed reaction is GTP + H2O = GDP + phosphate + H(+). Its function is as follows. Zinc chaperone that directly transfers zinc cofactor to target metalloproteins, thereby activating them. Catalyzes zinc insertion into the active site of methionine aminopeptidase MAP1, which function to cleave the initiator methionine from polypeptides during or after protein translation. Mechanistically, the N-terminal psi-PxLVp motif binds to the C6H2-type zinc finger of inactive form of MAP1. After formation of the docked complex, zinc is transferred from the CXCC motif in the GTPase domain of ZNG1 to the zinc binding site in the peptidase domain of MAP1 in a process requiring GTP hydrolysis. GTP/GDP exchange is required for release of active MAP1. This Saccharomyces cerevisiae (strain ATCC 204508 / S288c) (Baker's yeast) protein is Zinc-regulated GTPase metalloprotein activator 1.